A 136-amino-acid chain; its full sequence is Probable disulfide formation protein (136 aa).

A helical transmembrane segment spans residues 7–26 (NNALYFAWLICSTGTVMSIY). A disulfide bridge links Cys-36 with Cys-39. The next 2 membrane-spanning stretches (helical) occupy residues 41–60 (YQRI…TYRE) and 67–84 (YALP…YQIC). Cysteines 96 and 101 form a disulfide. Residues 109-133 (GFITVPMASALAFCAISCLLILSGS) form a helical membrane-spanning segment.

The protein belongs to the DsbB family. BdbC subfamily.

Its subcellular location is the cell inner membrane. Required for disulfide bond formation in some proteins. The polypeptide is Probable disulfide formation protein (Chlamydia caviae (strain ATCC VR-813 / DSM 19441 / 03DC25 / GPIC) (Chlamydophila caviae)).